The primary structure comprises 452 residues: Phosphoglucosamine mutase (452 aa).

Catalysis depends on Ser-97, which acts as the Phosphoserine intermediate. The Mg(2+) site is built by Ser-97, Asp-236, Asp-238, and Asp-240. Ser-97 carries the post-translational modification Phosphoserine.

This sequence belongs to the phosphohexose mutase family. Mg(2+) serves as cofactor. Activated by phosphorylation.

It carries out the reaction alpha-D-glucosamine 1-phosphate = D-glucosamine 6-phosphate. Functionally, catalyzes the conversion of glucosamine-6-phosphate to glucosamine-1-phosphate. In Prochlorococcus marinus subsp. pastoris (strain CCMP1986 / NIES-2087 / MED4), this protein is Phosphoglucosamine mutase.